Here is a 414-residue protein sequence, read N- to C-terminus: Esterase FrsA (414 aa).

It belongs to the FrsA family.

It carries out the reaction a carboxylic ester + H2O = an alcohol + a carboxylate + H(+). Its function is as follows. Catalyzes the hydrolysis of esters. This chain is Esterase FrsA, found in Escherichia coli O17:K52:H18 (strain UMN026 / ExPEC).